Reading from the N-terminus, the 294-residue chain is MHPRFQTAFAQLADNLQSALEPILADKYFPALLTGEQVSSLKSATGLDEDALAFALLPLAAACARTPLSNFNVGAIARGVSGTWYFGANMEFIGATMQQTVHAEQSAISHAWLSGEKALAAITVNYTPCGHCRQFMNELNSGLDLRIHLPGREAHALRDYLPDAFGPKDLEIKTLLMDEQDHGYALTGDALSQAAIAAANRSHMPYSKSPSGVALECKDGRIFSGSYAENAAFNPTLPPLQGALILLNLKGYDYPDIQRAVLAEKADAPLIQWDATSATLKALGCHNIDRVLLA.

CMP/dCMP-type deaminase domains lie at 48 to 168 and 186 to 294; these read DEDA…FGPK and LTGD…VLLA. Residue 89–91 participates in substrate binding; the sequence is NME. Histidine 102 lines the Zn(2+) pocket. Glutamate 104 acts as the Proton donor in catalysis. Zn(2+) contacts are provided by cysteine 129 and cysteine 132.

This sequence belongs to the cytidine and deoxycytidylate deaminase family. As to quaternary structure, homodimer. Zn(2+) serves as cofactor.

It catalyses the reaction cytidine + H2O + H(+) = uridine + NH4(+). The catalysed reaction is 2'-deoxycytidine + H2O + H(+) = 2'-deoxyuridine + NH4(+). This enzyme scavenges exogenous and endogenous cytidine and 2'-deoxycytidine for UMP synthesis. The protein is Cytidine deaminase of Escherichia coli O17:K52:H18 (strain UMN026 / ExPEC).